A 204-amino-acid chain; its full sequence is Pneumococcal vaccine antigen A (204 aa).

The protein resides in the cell surface. The protein is Pneumococcal vaccine antigen A (pvaA) of Streptococcus pneumoniae serotype 4 (strain ATCC BAA-334 / TIGR4).